A 969-amino-acid polypeptide reads, in one-letter code: RNA polymerase-associated protein RapA (969 aa).

Residues glutamate 164–aspartate 334 enclose the Helicase ATP-binding domain. Residue aspartate 177 to threonine 184 coordinates ATP. The short motif at aspartate 280–histidine 283 is the DEAH box element. The Helicase C-terminal domain occupies arginine 492–alanine 672.

The protein belongs to the SNF2/RAD54 helicase family. RapA subfamily. As to quaternary structure, interacts with the RNAP. Has a higher affinity for the core RNAP than for the holoenzyme. Its ATPase activity is stimulated by binding to RNAP.

In terms of biological role, transcription regulator that activates transcription by stimulating RNA polymerase (RNAP) recycling in case of stress conditions such as supercoiled DNA or high salt concentrations. Probably acts by releasing the RNAP, when it is trapped or immobilized on tightly supercoiled DNA. Does not activate transcription on linear DNA. Probably not involved in DNA repair. The protein is RNA polymerase-associated protein RapA of Aliivibrio salmonicida (strain LFI1238) (Vibrio salmonicida (strain LFI1238)).